The chain runs to 237 residues: Cytosolic-abundant heat soluble protein 1 (237 aa).

2 stretches are compositionally biased toward basic and acidic residues: residues 1–17 and 91–105; these read MPYEKHVEQTVVEKTEQ and VDMRPSPKLAEEARR. Disordered stretches follow at residues 1 to 35 and 85 to 105; these read MPYEKHVEQTVVEKTEQPGHSSTHHAPAQRTVARE and SGASTEVDMRPSPKLAEEARR. The stretch at 98–201 forms a coiled coil; it reads KLAEEARRDA…KEALERSRMA (104 aa). CAHS motif regions lie at residues 132-150 and 169-187; these read YRHQTEAEAEKIRRELEKQ and QKREVDLEAKMAKRELDRE. Residues 212 to 237 form a disordered region; it reads AGHTVSGGTTVSSVDKVETVRERKHH. Positions 226–237 are enriched in basic and acidic residues; sequence DKVETVRERKHH.

Belongs to the Cytosolic-abundant heat soluble protein (CAHS) family.

The protein localises to the cytoplasm. Its subcellular location is the nucleus. Functionally, CAHS proteins are cytosolic heat soluble proteins that seem to contribute to the anhydrobiosis in tardigrades, but their specific mechanisms are yet to be identified. It is possible that protection during anhydrobiosis might occur via the stabilization of vitrifying small molecules such as sugars, but not via the direct glass transition of CAHS proteins themselves. This chain is Cytosolic-abundant heat soluble protein 1, found in Ramazzottius varieornatus (Water bear).